Consider the following 239-residue polypeptide: Endoglucanase A (239 aa).

An N-terminal signal peptide occupies residues 1–16 (MKLSMTLSLFAATAMG).

This sequence belongs to the glycosyl hydrolase 12 (cellulase H) family.

It catalyses the reaction Endohydrolysis of (1-&gt;4)-beta-D-glucosidic linkages in cellulose, lichenin and cereal beta-D-glucans.. Has carboxylmethylcellulase activity. The sequence is that of Endoglucanase A (cekA) from Aspergillus kawachii (strain NBRC 4308) (White koji mold).